We begin with the raw amino-acid sequence, 537 residues long: Phosphoenolpyruvate carboxykinase (ATP) (537 aa).

Substrate is bound by residues Arg61, Tyr194, and Lys200. Residues Lys200, His219, and 235-243 (GLSGTGKTT) each bind ATP. Mn(2+) is bound by residues Lys200 and His219. Asp256 is a Mn(2+) binding site. ATP contacts are provided by Glu284, Arg322, and Thr448. Arg322 lines the substrate pocket.

It belongs to the phosphoenolpyruvate carboxykinase (ATP) family. Requires Mn(2+) as cofactor.

It is found in the cytoplasm. It catalyses the reaction oxaloacetate + ATP = phosphoenolpyruvate + ADP + CO2. It participates in carbohydrate biosynthesis; gluconeogenesis. Its function is as follows. Involved in the gluconeogenesis. Catalyzes the conversion of oxaloacetate (OAA) to phosphoenolpyruvate (PEP) through direct phosphoryl transfer between the nucleoside triphosphate and OAA. The chain is Phosphoenolpyruvate carboxykinase (ATP) from Bradyrhizobium sp. (strain BTAi1 / ATCC BAA-1182).